Consider the following 686-residue polypeptide: DNA ligase (686 aa).

NAD(+) is bound by residues Asp45–Asp49, Ser94–Leu95, and Glu127. Lys129 functions as the N6-AMP-lysine intermediate in the catalytic mechanism. NAD(+) contacts are provided by Arg150, Glu187, Lys302, and Lys326. Zn(2+)-binding residues include Cys420, Cys423, Cys438, and Cys444. The 82-residue stretch at Leu605–Ser686 folds into the BRCT domain.

Belongs to the NAD-dependent DNA ligase family. LigA subfamily. Mg(2+) serves as cofactor. Requires Mn(2+) as cofactor.

The catalysed reaction is NAD(+) + (deoxyribonucleotide)n-3'-hydroxyl + 5'-phospho-(deoxyribonucleotide)m = (deoxyribonucleotide)n+m + AMP + beta-nicotinamide D-nucleotide.. Functionally, DNA ligase that catalyzes the formation of phosphodiester linkages between 5'-phosphoryl and 3'-hydroxyl groups in double-stranded DNA using NAD as a coenzyme and as the energy source for the reaction. It is essential for DNA replication and repair of damaged DNA. This chain is DNA ligase, found in Psychrobacter sp. (strain PRwf-1).